The primary structure comprises 524 residues: Rho guanine nucleotide exchange factor 3 (524 aa).

The segment at 75–98 (SDSRPDLFSPRPWSRNTPAANTKR) is disordered. The region spanning 121-303 (IKRQEAIFEL…IQGIVAEINI (183 aa)) is the DH domain. The PH domain occupies 290–448 (AINIIQGIVA…QWLNCIRQAK (159 aa)).

It is found in the cytoplasm. Functionally, acts as a guanine nucleotide exchange factor (GEF) for RhoA and RhoB GTPases. This is Rho guanine nucleotide exchange factor 3 (Arhgef3) from Gallus gallus (Chicken).